The sequence spans 369 residues: Cobalt-precorrin-5B C(1)-methyltransferase (369 aa).

Belongs to the CbiD family.

The catalysed reaction is Co-precorrin-5B + S-adenosyl-L-methionine = Co-precorrin-6A + S-adenosyl-L-homocysteine. It participates in cofactor biosynthesis; adenosylcobalamin biosynthesis; cob(II)yrinate a,c-diamide from sirohydrochlorin (anaerobic route): step 6/10. Functionally, catalyzes the methylation of C-1 in cobalt-precorrin-5B to form cobalt-precorrin-6A. This is Cobalt-precorrin-5B C(1)-methyltransferase from Methanococcus vannielii (strain ATCC 35089 / DSM 1224 / JCM 13029 / OCM 148 / SB).